Consider the following 144-residue polypeptide: Maximins 7/H6 (144 aa).

The signal sequence occupies residues 1 to 18 (MNFKYIVAVSFLIASAYA). The propeptide occupies 19 to 43 (RSEENDEQSLSQRDILEEESLREIR). Residue Asn70 is modified to Asparagine amide. The propeptide occupies 74–123 (TAEDHEVMKRLEAVMRDLDSLDYPEEAAERETRGFNQEEIANLFTKKEKR). A Leucine amide modification is found at Leu143.

Belongs to the bombinin family. In terms of tissue distribution, expressed by the skin glands.

It localises to the secreted. Maximin-7 shows antimicrobial activity against bacteria and against the fungus C.albicans. It has little hemolytic activity. In terms of biological role, maximin-H6 shows antimicrobial activity against bacteria and against the fungus C.albicans. Shows strong hemolytic activity. The chain is Maximins 7/H6 from Bombina maxima (Giant fire-bellied toad).